Consider the following 281-residue polypeptide: Tetraspanin-5 (281 aa).

Residues 1-7 lie on the Cytoplasmic side of the membrane; it reads MNRMSNT. The helical transmembrane segment at 8–28 threads the bilayer; it reads VIGFLNILTLISSIVLLGSAL. Topologically, residues 29–44 are extracellular; sequence WMGRSKTTCEHFLQKP. A helical membrane pass occupies residues 45-65; that stretch reads LLILGLAILILSVAGLVGACC. The Cytoplasmic portion of the chain corresponds to 66–74; the sequence is DVAWVLWVY. The helical transmembrane segment at 75-95 threads the bilayer; it reads LFFMVFIIVALMGLTLFGFIV. At 96–221 the chain is on the extracellular side; that stretch reads TSHSGGVVVD…TVRRDWHKLS (126 aa). A helical membrane pass occupies residues 222–242; the sequence is LVNVIVVIFLIAVYCVGCCAF. Residues 243 to 281 lie on the Cytoplasmic side of the membrane; it reads KNAKRPQHYGFPYGRYGMSKSRPGWEQSWSRWWHGRDRY.

It belongs to the tetraspanin (TM4SF) family.

The protein localises to the membrane. May be involved in the regulation of cell differentiation. In Arabidopsis thaliana (Mouse-ear cress), this protein is Tetraspanin-5 (TET5).